Here is a 179-residue protein sequence, read N- to C-terminus: Protein TIFY 11a (179 aa).

The 36-residue stretch at 62–97 folds into the Tify domain; that stretch reads VDGGGQQFTIFYAGKVVVIDRCTPAMAAELMRFASA. The Jas motif lies at 115 to 140; that stretch reads PIARKASLKRFLAKRKATPASARSSY. The Nuclear localization signal motif lies at 117-124; that stretch reads ARKASLKR.

This sequence belongs to the TIFY/JAZ family. In terms of assembly, interacts with BHLH148. Interacts with COI1A in a coronatine-dependent manner. Interacts with COI1B in a coronatine-dependent manner. Coronatine is an analog of jasmonoyl isoleucine (JA-Ile). Interacts with RSS3. Forms a ternary complex with RSS3 and BHLH094 in the nucleus. Interacts with BHLH062 and NINJA1. Interacts with MYB30. Post-translationally, ubiquitinated. Targeted for degradation by the SCF(COI1) E3 ubiquitin ligase-proteasome pathway during jasmonate signaling.

Its subcellular location is the nucleus. Functionally, repressor of jasmonate (JA) responses. Forms a ternary complex with RSS3 and BHLH94 to negatively regulate JA-responsive genes. Acts as a positive regulator of tolerance to salt stress. Involved in salt tolerance by modulating potassium homeostasis through JA signaling and regulation of the expression of potassium ion transporter genes. Acts as a transcriptional regulator targeted by the SCF(COI1) E3 ubiquitin ligase complexes in the JA signaling pathway, and interacts with BHLH062 that may directly regulate the ion transporter genes. Acts as a positive regulator of tolerance to dehydration stress. Acts as a negative regulator of tolerance to cold stress by interacting with MYB30. The chain is Protein TIFY 11a from Oryza sativa subsp. japonica (Rice).